The sequence spans 95 residues: IgNAR transmembrane form NE (95 aa).

The 36-residue stretch at 1-36 (LTFSTRSLLNLPAVEWKSGAKYTCTASHSPSQSTVK) folds into the Ig-like domain. The span at 24–35 (CTASHSPSQSTV) shows a compositional bias: polar residues. Residues 24-79 (CTASHSPSQSTVKRVIRNPKESPKGSSETRKSPLEIMESPEDYGTEEDQLENVNED) are disordered. The span at 41–56 (NPKESPKGSSETRKSP) shows a compositional bias: basic and acidic residues. The segment covering 61–77 (ESPEDYGTEEDQLENVN) has biased composition (acidic residues). The N-linked (GlcNAc...) asparagine glycan is linked to Asn-81.

Expressed mainly in lymphoid tissues including spleen, epigonal organ and circulating lymphocytes. Also expressed at low levels in the pancreas.

This chain is IgNAR transmembrane form NE, found in Ginglymostoma cirratum (Nurse shark).